The following is a 48-amino-acid chain: Hemoglobin subunit beta-B (48 aa).

The region spanning glutamate 2–leucine 48 is the Globin domain.

The protein belongs to the globin family. As to quaternary structure, heterotetramer of two alpha chains and two beta chains. In terms of tissue distribution, red blood cells.

Functionally, involved in oxygen transport from gills to the various peripheral tissues. The chain is Hemoglobin subunit beta-B from Catostomus clarkii (Desert sucker).